A 408-amino-acid chain; its full sequence is Aminopeptidase T (408 aa).

A divalent metal cation contacts are provided by Glu-250, Glu-316, Glu-340, His-345, His-376, and Asp-378.

Belongs to the peptidase M29 family. In terms of assembly, homodimer. Co(2+) serves as cofactor. It depends on Zn(2+) as a cofactor. The cofactor is Mg(2+).

In terms of biological role, metal-dependent exopeptidase. This Thermus aquaticus protein is Aminopeptidase T.